We begin with the raw amino-acid sequence, 250 residues long: Glycerol-1-phosphate phosphohydrolase 1 (250 aa).

Aspartate 18 (nucleophile) is an active-site residue. Positions 18 and 20 each coordinate Mg(2+). Aspartate 20 acts as the Proton donor in catalysis. A Glycyl lysine isopeptide (Lys-Gly) (interchain with G-Cter in SUMO); alternate cross-link involves residue lysine 64. Lysine 64 participates in a covalent cross-link: Glycyl lysine isopeptide (Lys-Gly) (interchain with G-Cter in ubiquitin); alternate. Serine 90 bears the Phosphoserine mark. A Glycyl lysine isopeptide (Lys-Gly) (interchain with G-Cter in ubiquitin) cross-link involves residue lysine 144. Aspartate 179 contacts Mg(2+).

This sequence belongs to the HAD-like hydrolase superfamily. DOG/GPP family. Monomer. It depends on Mg(2+) as a cofactor.

It is found in the cytoplasm. The protein resides in the nucleus. The catalysed reaction is sn-glycerol 1-phosphate + H2O = glycerol + phosphate. The enzyme catalyses sn-glycerol 3-phosphate + H2O = glycerol + phosphate. Major isoform of glycerol-1-phosphate phosphohydrolase involved in glycerol biosynthesis. Plays a role in osmoadaptation and required for adaptation to anaerobic conditions. The sequence is that of Glycerol-1-phosphate phosphohydrolase 1 from Saccharomyces cerevisiae (strain ATCC 204508 / S288c) (Baker's yeast).